Reading from the N-terminus, the 452-residue chain is Probable receptor-like protein kinase At5g20050 (452 aa).

The first 23 residues, 1-23, serve as a signal peptide directing secretion; it reads MEDKKANIIATILILALVVVIIA. Residues 24-33 are Extracellular-facing; sequence ARVSLKLSKT. Residues 34–54 form a helical membrane-spanning segment; sequence FYLIAGVDISLILAVICFLII. The Cytoplasmic portion of the chain corresponds to 55-452; sequence RSRYNKERKL…SSIISPISPR (398 aa). The 290-residue stretch at 103–392 folds into the Protein kinase domain; the sequence is DGFRSLIGKG…MVIEMLEGRV (290 aa). ATP is bound by residues 109–117 and Lys-131; that span reads IGKGGSGSV. Tyr-178 is subject to Phosphotyrosine. Asp-236 (proton acceptor) is an active-site residue. Thr-270 and Thr-275 each carry phosphothreonine.

Belongs to the protein kinase superfamily. Ser/Thr protein kinase family.

Its subcellular location is the membrane. It carries out the reaction L-seryl-[protein] + ATP = O-phospho-L-seryl-[protein] + ADP + H(+). The catalysed reaction is L-threonyl-[protein] + ATP = O-phospho-L-threonyl-[protein] + ADP + H(+). This chain is Probable receptor-like protein kinase At5g20050, found in Arabidopsis thaliana (Mouse-ear cress).